Here is a 725-residue protein sequence, read N- to C-terminus: LPS-assembly protein LptD (725 aa).

A signal peptide spans 1–25 (MSLLSKLHLILYICLLLLPLRFVNA).

Belongs to the LptD family. As to quaternary structure, component of the lipopolysaccharide transport and assembly complex. Interacts with LptE and LptA.

Its subcellular location is the cell outer membrane. Together with LptE, is involved in the assembly of lipopolysaccharide (LPS) at the surface of the outer membrane. In Nitrosomonas eutropha (strain DSM 101675 / C91 / Nm57), this protein is LPS-assembly protein LptD.